Here is a 380-residue protein sequence, read N- to C-terminus: Protein neprosin (380 aa).

The first 24 residues, 1–24 (MQAKFFTFVILSSVFYFNYPLAEA), serve as a signal peptide directing secretion. Residues 25-128 (RSIQARLANK…QFPNLKFAPP (104 aa)) constitute a propeptide, activation peptide. Cysteines 52 and 98 form a disulfide. Residues Asn68, Asn145, and Asn152 are each glycosylated (N-linked (GlcNAc...) asparagine). In terms of domain architecture, Neprosin PEP catalytic spans 129-380 (SANTNHQYAV…YLFYGGPGCQ (252 aa)). Glu188 is a catalytic residue. Residues Cys219 and Cys224 are joined by a disulfide bond. An N-linked (GlcNAc...) asparagine glycan is attached at Asn253. Glu297 is a catalytic residue. Cys358 and Cys379 are disulfide-bonded.

It belongs to the peptidase G3 family.

It is found in the secreted. It catalyses the reaction Hydrolysis of Pro-|-Xaa &gt;&gt; Ala-|-Xaa in oligopeptides.. Weakly inhibited by the aspartic protease inhibitor pepstatin. Weakly inhibited by pepstatin A (IC(50) of 140 uM) and 1,2-epoxy-3-(p-nitrophenoxy)propane (EPNP) (IC(50) of 480 uM). Activity is not affected by the POP inhibitor Z-Pro-prolinal inhibitor or the denaturant urea. Its function is as follows. Glutamic endopeptidase that preferentially cleaves peptide bonds on the C-terminal side of proline residues. Also cleaves peptide bonds on the C-terminal side of alanine residues but with less efficiency. In contrast to most proline-cleaving enzymes, effectively degrades proteins of any size. Found in the viscoelastic fluid of the pitcher, and so likely functions in the digestion of their prey. The sequence is that of Protein neprosin from Nepenthes x ventrata (Red tropical pitcher plant).